The chain runs to 141 residues: Cystatin (141 aa).

Residues 1 to 26 (MVHSQLPVAAPLRLLCALLLLPSATM) form the signal peptide. The region spanning 29-129 (GGLSPRSVTD…CHFQVWSRPW (101 aa)) is the Cystatin domain. The Secondary area of contact signature appears at 73-77 (QVVAG). 2 cysteine pairs are disulfide-bonded: Cys91–Cys107 and Cys120–Cys140.

It belongs to the cystatin family. As to expression, expressed at a low level by the venom gland (at protein level).

The protein resides in the secreted. Functionally, inhibits various C1 cysteine proteases including cathepsin L, papain and cathepsin B. This protein has no toxic activity and its function in the venom is unknown. It may play a role as a housekeeping or regulatory protein. The chain is Cystatin from Pseudonaja textilis (Eastern brown snake).